The following is a 1097-amino-acid chain: Apolipoprotein B receptor (1097 aa).

Disordered regions lie at residues Gln-64–Glu-249, Ala-262–Ser-376, Glu-410–Gly-739, Gly-789–Glu-866, and Val-889–Gln-1097. 3 stretches are compositionally biased toward basic and acidic residues: residues Gly-83–Val-92, Glu-158–Glu-177, and Val-185–Gly-208. Positions Lys-209–Ala-218 are enriched in low complexity. Composition is skewed to basic and acidic residues over residues Gly-219 to Asp-232 and Gly-279 to Arg-302. Low complexity predominate over residues Thr-312 to Thr-330. Residues Ala-331–Glu-362 show a composition bias toward gly residues. At Ser-458 the chain carries Phosphoserine. Basic and acidic residues-rich tracts occupy residues Val-463–Glu-487 and Glu-496–Val-505. A Phosphoserine modification is found at Ser-510. Thr-572 carries the phosphothreonine modification. A Phosphoserine modification is found at Ser-594. 2 stretches are compositionally biased toward basic and acidic residues: residues Ser-594–Pro-606 and Asn-626–Thr-637. The segment covering Asp-640–Thr-652 has biased composition (acidic residues). 3 stretches are compositionally biased toward basic and acidic residues: residues Asp-791 to Ala-800, Gln-892 to Asp-918, and Arg-928 to Pro-950. Basic residues predominate over residues Ser-1000–Phe-1017. Residues Ala-1041–Glu-1050 are compositionally biased toward low complexity.

In terms of assembly, homodimer. There are 2 forms in macrophages, the membrane-binding proteins 200 kDa (MBP 200) and 235 kDa (MBP 235), that can be reduced into a single active ligand-binding species with intermediate mobility (MBP 200R). As to expression, expressed in peripheral blood leukocytes &gt; bone marrow = spleen &gt; lymph node, and only faintly visible in appendix and thymus. Expressed in the brain, heart, kidney, liver, lung, pancreas, and placenta. Expressed primarily by reticuloendothelial cells: monocytes, macrophages, and endothelial cells. Expressed in atherosclerotic lesion foam cells.

It is found in the cell membrane. Functionally, macrophage receptor that binds to the apolipoprotein B48 (APOB) of dietary triglyceride (TG)-rich lipoproteins (TRL) or to a like domain of APOB in hypertriglyceridemic very low density lipoprotein (HTG-VLDL). Binds and internalizes TRL when out of the context of the macrophage. May provide essential lipids to reticuloendothelial cells. Could also be involved in foam cell formation with elevated TRL and remnant lipoprotein (RLP). Mediates the rapid high-affinity uptake of chylomicrons (CM), HTG-VLDL, and trypsinized (tryp) VLDL devoid of APOE in vitro in macrophages. This is Apolipoprotein B receptor from Homo sapiens (Human).